Here is a 235-residue protein sequence, read N- to C-terminus: Probable membrane-associated kinase regulator 6 (235 aa).

Positions 108-140 (SAATEEESEPLDTTTSEKIDTRGLNSKPSPTSS) are disordered. Positions 130 to 140 (GLNSKPSPTSS) are enriched in polar residues.

It localises to the cell membrane. May be involved in abscisic acid signaling by acting as a kinase regulator. The polypeptide is Probable membrane-associated kinase regulator 6 (MAKR6) (Arabidopsis thaliana (Mouse-ear cress)).